A 166-amino-acid polypeptide reads, in one-letter code: Deglycase TK1284 (166 aa).

A PfpI endopeptidase domain is found at 1–166; sequence MKVLILSADG…WMREFVKLLR (166 aa). The active site involves His101.

Belongs to the peptidase C56 family. In terms of assembly, homohexamer formed by a dimer of trimers that assemble into a hollow ring structure.

It is found in the cytoplasm. The catalysed reaction is N(omega)-(1-hydroxy-2-oxopropyl)-L-arginyl-[protein] + H2O = lactate + L-arginyl-[protein] + H(+). It carries out the reaction N(6)-(1-hydroxy-2-oxopropyl)-L-lysyl-[protein] + H2O = lactate + L-lysyl-[protein] + H(+). The enzyme catalyses S-(1-hydroxy-2-oxopropyl)-L-cysteinyl-[protein] + H2O = lactate + L-cysteinyl-[protein] + H(+). It catalyses the reaction N(omega)-(1-hydroxy-2-oxoethyl)-L-arginyl-[protein] + H2O = L-arginyl-[protein] + glycolate + H(+). The catalysed reaction is N(6)-(1-hydroxy-2-oxoethyl)-L-lysyl-[protein] + H2O = glycolate + L-lysyl-[protein] + H(+). It carries out the reaction S-(1-hydroxy-2-oxoethyl)-L-cysteinyl-[protein] + H2O = glycolate + L-cysteinyl-[protein] + H(+). Functionally, deglycase that catalyzes the deglycation of the Maillard adducts formed between amino groups of proteins and reactive carbonyl groups of glyoxals. Thus, functions as a protein deglycase that repairs methylglyoxal- and glyoxal-glycated proteins, and releases repaired proteins and lactate or glycolate, respectively. Deglycates cysteine, arginine and lysine residues in proteins, and thus reactivates these proteins by reversing glycation by glyoxals. Acts on early glycation intermediates (hemithioacetals and aminocarbinols), preventing the formation of advanced glycation endproducts (AGE) that cause irreversible damage. Also displays proteolytic activity. The polypeptide is Deglycase TK1284 (Thermococcus kodakarensis (strain ATCC BAA-918 / JCM 12380 / KOD1) (Pyrococcus kodakaraensis (strain KOD1))).